Reading from the N-terminus, the 316-residue chain is Epoxide hydrolase 2 (316 aa).

The AB hydrolase-1 domain maps to 25 to 302; it reads PAVLFLHGFP…AAHFINQERP (278 aa). Residue aspartate 101 is the Nucleophile of the active site. An an epoxide-binding site is contributed by tyrosine 150. Tyrosine 230 acts as the Proton donor in catalysis. The active-site Proton acceptor is histidine 295.

Belongs to the AB hydrolase superfamily. Epoxide hydrolase family. As to quaternary structure, homodimer. In terms of tissue distribution, highly expressed in young fruits 15 days after anthesis (15-DAA). Also observed in stems and leaves.

It carries out the reaction an epoxide + H2O = an ethanediol. The catalysed reaction is (24S)-24,25-epoxycucurbitadienol + H2O = (24R)-24,25-dihydroxycucurbitadienol. It participates in secondary metabolite biosynthesis; terpenoid biosynthesis. In terms of biological role, epoxide hydrolase involved in the biosynthesis of cucurbitacin and mogroside tetracyclic triterpene natural products (e.g. siamenoside I and mogrosides IV, V and VI). Cucurbitacins have cytotoxic properties and exhibit deterrent taste as a defense barrier against herbivores. Mogrosides are nonsugar highly oxygenated compounds used as high-intensity zero-calorie sweeteners; they also possess pharmacological properties such as regulating immunity, lowering blood sugar and lipid levels, protecting the liver, and acting as antioxidants and antitumor agents. Catalyzes the hydrolysis of aromatic epoxide-containing substrates, such as the conversion of 24,25-epoxycucurbitadienol to 24,25-dihydroxycucurbitadienol. This chain is Epoxide hydrolase 2, found in Siraitia grosvenorii (Monk's fruit).